A 209-amino-acid polypeptide reads, in one-letter code: Imidazole glycerol phosphate synthase subunit HisH (209 aa).

The 207-residue stretch at 3–209 (SVAVIDYGMG…ANFLTWNGVS (207 aa)) folds into the Glutamine amidotransferase type-1 domain. The active-site Nucleophile is the C82. Residues H187 and E189 contribute to the active site.

Heterodimer of HisH and HisF.

The protein localises to the cytoplasm. It carries out the reaction 5-[(5-phospho-1-deoxy-D-ribulos-1-ylimino)methylamino]-1-(5-phospho-beta-D-ribosyl)imidazole-4-carboxamide + L-glutamine = D-erythro-1-(imidazol-4-yl)glycerol 3-phosphate + 5-amino-1-(5-phospho-beta-D-ribosyl)imidazole-4-carboxamide + L-glutamate + H(+). It catalyses the reaction L-glutamine + H2O = L-glutamate + NH4(+). It participates in amino-acid biosynthesis; L-histidine biosynthesis; L-histidine from 5-phospho-alpha-D-ribose 1-diphosphate: step 5/9. IGPS catalyzes the conversion of PRFAR and glutamine to IGP, AICAR and glutamate. The HisH subunit catalyzes the hydrolysis of glutamine to glutamate and ammonia as part of the synthesis of IGP and AICAR. The resulting ammonia molecule is channeled to the active site of HisF. This Nitrosococcus oceani (strain ATCC 19707 / BCRC 17464 / JCM 30415 / NCIMB 11848 / C-107) protein is Imidazole glycerol phosphate synthase subunit HisH.